The sequence spans 229 residues: Demethylmenaquinone methyltransferase (229 aa).

Residues threonine 57, aspartate 77, and 101–102 (DV) each bind S-adenosyl-L-methionine.

It belongs to the class I-like SAM-binding methyltransferase superfamily. MenG/UbiE family.

It catalyses the reaction a 2-demethylmenaquinol + S-adenosyl-L-methionine = a menaquinol + S-adenosyl-L-homocysteine + H(+). It functions in the pathway quinol/quinone metabolism; menaquinone biosynthesis; menaquinol from 1,4-dihydroxy-2-naphthoate: step 2/2. Functionally, methyltransferase required for the conversion of demethylmenaquinol (DMKH2) to menaquinol (MKH2). This chain is Demethylmenaquinone methyltransferase, found in Chlamydia muridarum (strain MoPn / Nigg).